The sequence spans 182 residues: Inosine/xanthosine triphosphatase (182 aa).

Belongs to the YjjX NTPase family. In terms of assembly, homodimer. Mg(2+) is required as a cofactor. Requires Mn(2+) as cofactor.

The catalysed reaction is XTP + H2O = XDP + phosphate + H(+). It catalyses the reaction ITP + H2O = IDP + phosphate + H(+). Its function is as follows. Phosphatase that hydrolyzes non-canonical purine nucleotides such as XTP and ITP to their respective diphosphate derivatives. Probably excludes non-canonical purines from DNA/RNA precursor pool, thus preventing their incorporation into DNA/RNA and avoiding chromosomal lesions. In Vibrio parahaemolyticus serotype O3:K6 (strain RIMD 2210633), this protein is Inosine/xanthosine triphosphatase.